A 78-amino-acid polypeptide reads, in one-letter code: Small ribosomal subunit protein bS18 (78 aa).

Belongs to the bacterial ribosomal protein bS18 family. Part of the 30S ribosomal subunit. Forms a tight heterodimer with protein bS6.

Its function is as follows. Binds as a heterodimer with protein bS6 to the central domain of the 16S rRNA, where it helps stabilize the platform of the 30S subunit. The polypeptide is Small ribosomal subunit protein bS18 (Pediococcus pentosaceus (strain ATCC 25745 / CCUG 21536 / LMG 10740 / 183-1w)).